The chain runs to 363 residues: Putative dipeptidase YkvY (363 aa).

Asp-222, Asp-233, His-297, Glu-326, and Glu-340 together coordinate Mn(2+).

The protein belongs to the peptidase M24B family. It depends on Mn(2+) as a cofactor.

The polypeptide is Putative dipeptidase YkvY (ykvY) (Bacillus subtilis (strain 168)).